A 116-amino-acid chain; its full sequence is Calcium-regulated OB-fold protein CarO (116 aa).

The N-terminal stretch at 1–21 is a signal peptide; sequence MKLRHLPLIAAIGLFSTVTLA.

It localises to the periplasm. Its function is as follows. Plays a role in intracellular Ca(2+) homeostasis. Involved in cell protection against oxidative stress in strain 25W. In Pseudomonas aeruginosa (strain ATCC 15692 / DSM 22644 / CIP 104116 / JCM 14847 / LMG 12228 / 1C / PRS 101 / PAO1), this protein is Calcium-regulated OB-fold protein CarO.